Consider the following 337-residue polypeptide: Anthranilate phosphoribosyltransferase (337 aa).

Residues glycine 81, glycine 84 to aspartate 85, serine 89, asparagine 91 to threonine 94, lysine 109 to serine 117, and alanine 121 each bind 5-phospho-alpha-D-ribose 1-diphosphate. Glycine 81 provides a ligand contact to anthranilate. Position 93 (serine 93) interacts with Mg(2+). An anthranilate-binding site is contributed by asparagine 112. Arginine 167 lines the anthranilate pocket. Mg(2+) is bound by residues aspartate 226 and glutamate 227.

The protein belongs to the anthranilate phosphoribosyltransferase family. Homodimer. Mg(2+) is required as a cofactor.

It catalyses the reaction N-(5-phospho-beta-D-ribosyl)anthranilate + diphosphate = 5-phospho-alpha-D-ribose 1-diphosphate + anthranilate. The protein operates within amino-acid biosynthesis; L-tryptophan biosynthesis; L-tryptophan from chorismate: step 2/5. Functionally, catalyzes the transfer of the phosphoribosyl group of 5-phosphorylribose-1-pyrophosphate (PRPP) to anthranilate to yield N-(5'-phosphoribosyl)-anthranilate (PRA). This chain is Anthranilate phosphoribosyltransferase, found in Bradyrhizobium diazoefficiens (strain JCM 10833 / BCRC 13528 / IAM 13628 / NBRC 14792 / USDA 110).